The primary structure comprises 209 residues: N-(5'-phosphoribosyl)anthranilate isomerase (209 aa).

It belongs to the TrpF family.

The enzyme catalyses N-(5-phospho-beta-D-ribosyl)anthranilate = 1-(2-carboxyphenylamino)-1-deoxy-D-ribulose 5-phosphate. Its pathway is amino-acid biosynthesis; L-tryptophan biosynthesis; L-tryptophan from chorismate: step 3/5. This Erythrobacter litoralis (strain HTCC2594) protein is N-(5'-phosphoribosyl)anthranilate isomerase.